A 117-amino-acid polypeptide reads, in one-letter code: MVSSATICSLLLLSMLWMDMAMAGSSFLSPEHQKAQQRKESKKPPAKLQPRALEGWLHPEDRGQAEEAEEELEIRFNAPFDVGIKLSGAQYQQHGRALGKFLQDILWEEVKEAPANK.

An N-terminal signal peptide occupies residues 1–23 (MVSSATICSLLLLSMLWMDMAMA). A lipid anchor (O-decanoyl serine; alternate) is attached at serine 26. Serine 26 carries O-hexanoyl serine; alternate lipidation. Serine 26 is lipidated: O-octanoyl serine; alternate. The segment at 28–68 (LSPEHQKAQQRKESKKPPAKLQPRALEGWLHPEDRGQAEEA) is disordered. Residues 31-43 (EHQKAQQRKESKK) show a composition bias toward basic and acidic residues. The propeptide at 52-75 (ALEGWLHPEDRGQAEEAEEELEIR) is removed in mature form. Leucine 98 is subject to Leucine amide. A propeptide spans 99–117 (GKFLQDILWEEVKEAPANK) (removed in mature form).

The protein belongs to the motilin family. In terms of processing, O-octanoylated by GOAT/MBOAT4. O-octanoylation is essential for ghrelin activity. The replacement of Ser-26 by aromatic tryptophan preserves ghrelin activity. Post-translationally, amidation of Leu-98 is essential for obestatin activity. As to expression, ghrelin is broadly expressed with higher expression in the stomach. Very low levels are detected in the hypothalamus, heart, lung, pancreas, intestine and adipose tissue. Obestatin is most highly expressed in jejunum, and also found in duodenum, stomach, pituitary, ileum, liver, hypothalamus and heart. Expressed in low levels in pancreas, cerebellum, cerebrum, kidney, testis, ovary colon and lung.

It localises to the secreted. In terms of biological role, ghrelin is the ligand for growth hormone secretagogue receptor type 1 (GHSR). Induces the release of growth hormone from the pituitary. Has an appetite-stimulating effect, induces adiposity and stimulates gastric acid secretion. Involved in growth regulation. Functionally, obestatin may be the ligand for GPR39. May have an appetite-reducing effect resulting in decreased food intake. May reduce gastric emptying activity and jejunal motility. The polypeptide is Appetite-regulating hormone (Ghrl) (Rattus norvegicus (Rat)).